The primary structure comprises 181 residues: Nucleoside triphosphate/diphosphate phosphatase (181 aa).

Arg-26 (proton donor) is an active-site residue. Mg(2+)-binding residues include Asn-90, Asp-106, Asp-108, Asp-110, Asp-123, and Glu-126.

Belongs to the Ntdp family. Mg(2+) is required as a cofactor.

The catalysed reaction is a ribonucleoside 5'-triphosphate + H2O = a ribonucleoside 5'-diphosphate + phosphate + H(+). It catalyses the reaction a ribonucleoside 5'-diphosphate + H2O = a ribonucleoside 5'-phosphate + phosphate + H(+). Functionally, has nucleoside phosphatase activity towards nucleoside triphosphates and nucleoside diphosphates. The protein is Nucleoside triphosphate/diphosphate phosphatase of Ligilactobacillus salivarius (strain UCC118) (Lactobacillus salivarius).